Here is a 132-residue protein sequence, read N- to C-terminus: Small ribosomal subunit protein uS8 (132 aa).

The protein belongs to the universal ribosomal protein uS8 family. In terms of assembly, part of the 30S ribosomal subunit. Contacts proteins S5 and S12.

Functionally, one of the primary rRNA binding proteins, it binds directly to 16S rRNA central domain where it helps coordinate assembly of the platform of the 30S subunit. In Caldanaerobacter subterraneus subsp. tengcongensis (strain DSM 15242 / JCM 11007 / NBRC 100824 / MB4) (Thermoanaerobacter tengcongensis), this protein is Small ribosomal subunit protein uS8 (rpsH).